The chain runs to 406 residues: Uronyl 2-sulfotransferase (406 aa).

The Cytoplasmic segment spans residues 1–49 (MKKKQQHPGGGADPWPHGAPMGGAPPGLGSWKRRVPLLPFLRFSLRDYG). A helical; Signal-anchor for type II membrane protein transmembrane segment spans residues 50–70 (FCMATLLVFCLGSLLYQLSGG). Topologically, residues 71–406 (PPRFLLDLRQ…EKWLEDIYKR (336 aa)) are lumenal. Asparagine 84, asparagine 140, and asparagine 155 each carry an N-linked (GlcNAc...) asparagine glycan. Residue histidine 168 is part of the active site. 2 N-linked (GlcNAc...) asparagine glycosylation sites follow: asparagine 173 and asparagine 319. Acidic residues predominate over residues 387–399 (EPIDDEEQDDEKW). The interval 387 to 406 (EPIDDEEQDDEKWLEDIYKR) is disordered.

It belongs to the sulfotransferase 3 family. Widely expressed.

Its subcellular location is the golgi apparatus membrane. Sulfotransferase that catalyzes the transfer of sulfate to the position 2 of uronyl residues in glycosaminoglycan chains. Has mainly activity toward iduronyl residues in dermatan sulfate, and weaker activity toward glucuronyl residues of chondroitin sulfate. Has little to no activity toward desulfated N-resulfated heparin or N-sulfoheparosan. In Homo sapiens (Human), this protein is Uronyl 2-sulfotransferase.